Here is a 335-residue protein sequence, read N- to C-terminus: Tryptophan--tRNA ligase (335 aa).

Residues 13–15 (QPS) and 21–22 (GN) contribute to the ATP site. Residues 14–22 (PSGELTIGN) carry the 'HIGH' region motif. D138 provides a ligand contact to L-tryptophan. Residues 150-152 (GKD), I189, and 198-202 (KMSKS) contribute to the ATP site. The 'KMSKS' region motif lies at 198 to 202 (KMSKS).

The protein belongs to the class-I aminoacyl-tRNA synthetase family. Homodimer.

The protein localises to the cytoplasm. The catalysed reaction is tRNA(Trp) + L-tryptophan + ATP = L-tryptophyl-tRNA(Trp) + AMP + diphosphate + H(+). Its function is as follows. Catalyzes the attachment of tryptophan to tRNA(Trp). This Clostridium acetobutylicum (strain ATCC 824 / DSM 792 / JCM 1419 / IAM 19013 / LMG 5710 / NBRC 13948 / NRRL B-527 / VKM B-1787 / 2291 / W) protein is Tryptophan--tRNA ligase.